We begin with the raw amino-acid sequence, 196 residues long: Protein LSM12 homolog A (196 aa).

Residues 3–73 form the Sm domain; it reads APGPGEYFSV…VSEVDIINDR (71 aa). One can recognise an AD domain in the interval 81–175; that stretch reads ASLNISKLAN…IVEKHFRDVE (95 aa). The interval 174 to 196 is disordered; it reads VESQKTMQRSQAQQTQKDSSLSS. A compositionally biased stretch (polar residues) spans 177–196; sequence QKTMQRSQAQQTQKDSSLSS.

The protein belongs to the LSM12 family.

The chain is Protein LSM12 homolog A (lsm12a) from Danio rerio (Zebrafish).